We begin with the raw amino-acid sequence, 243 residues long: HTH-type transcriptional regulator MlrA (243 aa).

The HTH merR-type domain occupies 3–72 (LYTIGEVALL…VSKVKMLLSN (70 aa)). Positions 6 to 25 (IGEVALLCDINPVTLRAWQR) form a DNA-binding region, H-T-H motif.

In terms of assembly, interacts with DgcM and PdeR.

With respect to regulation, activity is regulated by DgcM and PdeR. In terms of biological role, activates transcription of csgD, the master regulator of biofilm formation, by binding to its promoter region. Also controls the transcription of cadC and ibaG. Part of a signaling cascade that regulates curli biosynthesis. The cascade is composed of two c-di-GMP control modules, in which c-di-GMP controlled by the DgcE/PdeH pair (module I) regulates the activity of the DgcM/PdeR pair (module II), which in turn regulates activity of the transcription factor MlrA. The chain is HTH-type transcriptional regulator MlrA from Escherichia coli (strain K12).